Consider the following 651-residue polypeptide: Ion-translocating oxidoreductase complex subunit C (651 aa).

2 4Fe-4S ferredoxin-type domains span residues 368–398 and 408–437; these read EYAE…QQLY and KSEE…IQYF. The [4Fe-4S] cluster site is built by Cys378, Cys381, Cys384, Cys388, Cys417, Cys420, Cys423, and Cys427. 2 stretches are compositionally biased toward basic and acidic residues: residues 465–477 and 485–513; these read QARM…ERKA and ARRE…KANE. Disordered regions lie at residues 465-565 and 583-624; these read QARM…QPTD and LAQA…DPKK. Composition is skewed to polar residues over residues 554–564 and 587–600; these read VENQEQQTQPT and NSTS…QTAE. Basic and acidic residues predominate over residues 602 to 614; that stretch reads EVEKTKSAVEKTQ.

It belongs to the 4Fe4S bacterial-type ferredoxin family. RnfC subfamily. The complex is composed of six subunits: RnfA, RnfB, RnfC, RnfD, RnfE and RnfG. The cofactor is [4Fe-4S] cluster.

The protein resides in the cell inner membrane. Functionally, part of a membrane-bound complex that couples electron transfer with translocation of ions across the membrane. The sequence is that of Ion-translocating oxidoreductase complex subunit C from Haemophilus influenzae (strain PittEE).